Consider the following 250-residue polypeptide: Putative HTH-type transcriptional regulatory protein PAE1627 (250 aa).

The 55-residue stretch at 129 to 183 (LRAKRQQAGLSLGTLATNLGVTRETVYRYERGEIEAPLKIAEKLINMFGEDITKK) folds into the HTH cro/C1-type domain. The H-T-H motif DNA-binding region spans 140–159 (LGTLATNLGVTRETVYRYER).

The protein is Putative HTH-type transcriptional regulatory protein PAE1627 of Pyrobaculum aerophilum (strain ATCC 51768 / DSM 7523 / JCM 9630 / CIP 104966 / NBRC 100827 / IM2).